Reading from the N-terminus, the 346-residue chain is NADH-quinone oxidoreductase subunit H (346 aa).

9 helical membrane passes run 13 to 33, 51 to 71, 83 to 103, 116 to 136, 162 to 182, 191 to 211, 244 to 264, 278 to 298, and 310 to 330; these read ILLI…ALAF, PNVV…KYIV, AVYF…WAVI, VAVL…IMGG, IGLI…TAIV, LLNW…ISAL, FMIG…LLFF, VFWM…VKAI, and LGWK…AFMA.

It belongs to the complex I subunit 1 family. NDH-1 is composed of 14 different subunits. Subunits NuoA, H, J, K, L, M, N constitute the membrane sector of the complex.

It is found in the cell inner membrane. It catalyses the reaction a quinone + NADH + 5 H(+)(in) = a quinol + NAD(+) + 4 H(+)(out). In terms of biological role, NDH-1 shuttles electrons from NADH, via FMN and iron-sulfur (Fe-S) centers, to quinones in the respiratory chain. The immediate electron acceptor for the enzyme in this species is believed to be ubiquinone. Couples the redox reaction to proton translocation (for every two electrons transferred, four hydrogen ions are translocated across the cytoplasmic membrane), and thus conserves the redox energy in a proton gradient. This subunit may bind ubiquinone. In Jannaschia sp. (strain CCS1), this protein is NADH-quinone oxidoreductase subunit H.